The primary structure comprises 213 residues: Putative manganese efflux pump MntP (213 aa).

The next 7 membrane-spanning stretches (helical) occupy residues 6–26 (LGVL…GIGM), 34–54 (AFML…FGIL), 58–78 (ALGL…LFFL), 107–127 (GSGG…LFAP), 132–152 (LVVI…SLGT), 153–173 (VGAQ…IMTV), and 192–212 (LAGG…SASP).

This sequence belongs to the MntP (TC 9.B.29) family.

The protein localises to the cell membrane. Functionally, probably functions as a manganese efflux pump. This is Putative manganese efflux pump MntP from Heliobacterium modesticaldum (strain ATCC 51547 / Ice1).